The sequence spans 416 residues: Lysosome-associated membrane glycoprotein 3 (416 aa).

Residues methionine 1 to alanine 27 form the signal peptide. Topologically, residues lysine 28–threonine 381 are lumenal. Asparagine 112, asparagine 158, asparagine 164, asparagine 200, asparagine 232, asparagine 266, and asparagine 291 each carry an N-linked (GlcNAc...) asparagine glycan. Disordered stretches follow at residues proline 136–threonine 167 and serine 179–glutamine 219. The segment covering histidine 143–threonine 160 has biased composition (low complexity). Over residues proline 188–alanine 208 the composition is skewed to low complexity. A disulfide bond links cysteine 237 and cysteine 274. A disulfide bridge connects residues cysteine 339 and cysteine 376. The chain crosses the membrane as a helical span at residues isoleucine 382–tyrosine 402. Residues lysine 403–isoleucine 416 lie on the Cytoplasmic side of the membrane.

Belongs to the LAMP family. In terms of assembly, monomer. Interacts with FURIN. As to quaternary structure, (Microbial infection) Interacts with mumps virus protein F; this interaction promotes protein F cleavage by FURIN. Detected in tonsil interdigitating dendritic cells, in spleen, lymph node, Peyer's patches in the small instestine, in thymus medulla and in B-cells (at protein level). Expressed in lymphoid organs and dendritic cells. Expressed in lung. Up-regulated in carcinomas of the esophagus, colon, rectum, ureter, stomach, breast, fallopian tube, thyroid and parotid tissues.

The protein localises to the cell surface. The protein resides in the lysosome membrane. It localises to the cytoplasmic vesicle membrane. It is found in the early endosome membrane. In terms of biological role, lysosomal membrane glycoprotein which plays a role in the unfolded protein response (UPR) that contributes to protein degradation and cell survival during proteasomal dysfunction. Plays a role in the process of fusion of the lysosome with the autophagosome, thereby modulating the autophagic process. Promotes hepatocellular lipogenesis through activation of the PI3K/Akt pathway. May also play a role in dendritic cell function and in adaptive immunity. Functionally, (Microbial infection) Plays a positive role in post-entry steps of influenza A virus replication, either virus uncoating, cytosolic transport, or nuclear import of viral components, and promotes nuclear accumulation of influenza nucleoprotein/NP at early stages of viral infection. Its function is as follows. (Microbial infection) Supports the FURIN-mediated cleavage of mumps virus fusion protein F by interacting with both FURIN and the unprocessed form but not the processed form of the viral protein F. (Microbial infection) Promotes the intracellular proliferation of Salmonella typhimuium. In Homo sapiens (Human), this protein is Lysosome-associated membrane glycoprotein 3 (LAMP3).